The following is a 617-amino-acid chain: Proline--tRNA ligase (617 aa).

The protein belongs to the class-II aminoacyl-tRNA synthetase family. ProS type 1 subfamily. In terms of assembly, homodimer.

The protein localises to the cytoplasm. It catalyses the reaction tRNA(Pro) + L-proline + ATP = L-prolyl-tRNA(Pro) + AMP + diphosphate. Catalyzes the attachment of proline to tRNA(Pro) in a two-step reaction: proline is first activated by ATP to form Pro-AMP and then transferred to the acceptor end of tRNA(Pro). As ProRS can inadvertently accommodate and process non-cognate amino acids such as alanine and cysteine, to avoid such errors it has two additional distinct editing activities against alanine. One activity is designated as 'pretransfer' editing and involves the tRNA(Pro)-independent hydrolysis of activated Ala-AMP. The other activity is designated 'posttransfer' editing and involves deacylation of mischarged Ala-tRNA(Pro). The misacylated Cys-tRNA(Pro) is not edited by ProRS. The polypeptide is Proline--tRNA ligase (Streptococcus pneumoniae (strain ATCC BAA-255 / R6)).